Reading from the N-terminus, the 214-residue chain is C-type lectin domain family 2 member L (214 aa).

The tract at residues 1–56 (MEPAREPPSRARPPPPLAARPAPAPAAPRPRSPAEAEARGPEGLLRRSGSGYEGST) is disordered. Residues 10 to 31 (RARPPPPLAARPAPAPAAPRPR) are compositionally biased toward pro residues. Ser-32 is subject to Phosphoserine. A helical transmembrane segment spans residues 69 to 89 (LLLGAIAVLLFAILVVMSILA). In terms of domain architecture, C-type lectin spans 107–209 (YGRKCYFFSE…CLMTRPWVCS (103 aa)). Intrachain disulfides connect Cys-128–Cys-208 and Cys-187–Cys-200.

The protein localises to the membrane. In Homo sapiens (Human), this protein is C-type lectin domain family 2 member L (CLEC2L).